Reading from the N-terminus, the 637-residue chain is Phosphomethylpyrimidine synthase (637 aa).

Substrate contacts are provided by residues Asn-242, Met-271, Tyr-300, His-336, 356–358 (SRG), 397–400 (DGLR), and Glu-436. Position 440 (His-440) interacts with Zn(2+). Tyr-463 serves as a coordination point for substrate. His-504 provides a ligand contact to Zn(2+). [4Fe-4S] cluster-binding residues include Cys-584, Cys-587, and Cys-592.

The protein belongs to the ThiC family. As to quaternary structure, homodimer. Requires [4Fe-4S] cluster as cofactor.

The enzyme catalyses 5-amino-1-(5-phospho-beta-D-ribosyl)imidazole + S-adenosyl-L-methionine = 4-amino-2-methyl-5-(phosphooxymethyl)pyrimidine + CO + 5'-deoxyadenosine + formate + L-methionine + 3 H(+). It functions in the pathway cofactor biosynthesis; thiamine diphosphate biosynthesis. Functionally, catalyzes the synthesis of the hydroxymethylpyrimidine phosphate (HMP-P) moiety of thiamine from aminoimidazole ribotide (AIR) in a radical S-adenosyl-L-methionine (SAM)-dependent reaction. This Herminiimonas arsenicoxydans protein is Phosphomethylpyrimidine synthase.